Consider the following 154-residue polypeptide: Transcriptional repressor NrdR (154 aa).

A zinc finger lies at 3–34 (CPTCKYNGTRVVDSRPADDGNSIRRRRECEKC). The ATP-cone domain maps to 49–139 (LIVVKKDGAR…VYRQFKDISV (91 aa)).

The protein belongs to the NrdR family. Zn(2+) serves as cofactor.

Functionally, negatively regulates transcription of bacterial ribonucleotide reductase nrd genes and operons by binding to NrdR-boxes. This chain is Transcriptional repressor NrdR, found in Listeria welshimeri serovar 6b (strain ATCC 35897 / DSM 20650 / CCUG 15529 / CIP 8149 / NCTC 11857 / SLCC 5334 / V8).